A 1131-amino-acid polypeptide reads, in one-letter code: Filamin A-interacting protein 1-like (1131 aa).

Residues 1 to 62 (MRSRSSNAEG…KSHTGKGHHT (62 aa)) form a disordered region. Residues 50-62 (VSEKSHTGKGHHT) show a composition bias toward basic and acidic residues. Coiled coils occupy residues 139 to 583 (NELD…LSKV) and 610 to 780 (SKST…KSLR). Serine 789 bears the Phosphoserine mark. 2 positions are modified to phosphothreonine: threonine 984 and threonine 992. The residue at position 1050 (serine 1050) is a Phosphoserine.

The protein belongs to the FILIP1 family.

The protein localises to the cytoplasm. Its subcellular location is the membrane. The protein resides in the nucleus. Its function is as follows. Acts as a regulator of the antiangiogenic activity on endothelial cells. When overexpressed in endothelial cells, leads to inhibition of cell proliferation and migration and an increase in apoptosis. Inhibits melanoma growth When expressed in tumor-associated vasculature. The protein is Filamin A-interacting protein 1-like (Filip1l) of Mus musculus (Mouse).